Here is a 157-residue protein sequence, read N- to C-terminus: Arginine repressor (157 aa).

This sequence belongs to the ArgR family.

The protein resides in the cytoplasm. It participates in amino-acid biosynthesis; L-arginine biosynthesis [regulation]. Its function is as follows. Regulates arginine biosynthesis genes. The polypeptide is Arginine repressor (Deinococcus radiodurans (strain ATCC 13939 / DSM 20539 / JCM 16871 / CCUG 27074 / LMG 4051 / NBRC 15346 / NCIMB 9279 / VKM B-1422 / R1)).